The primary structure comprises 318 residues: MRNGAHRCESAMPGVTMTVLGCGKLGTAIIQGLLRSCPKASEAAPQKYLYPISTVIAAVRSKDRLESLIKSLVAEINDHTCPLDFVIANNVEAVRRADVVFLACHPNQATECLGGIGMQDAISGKLVISVLGGVSVATLEQAVYSSTRRPASGQAPCHIVQAIANTAAARQQSVTVVAEEETANSHEKGSLCEDVLRRLGQVSYVSPDLMPAVTALCASGTAFFTTYLDAMIQGAVSEGLGEDVATRLAALTMAGAANAVISGEHPAAVTSRVTTPGGVTAEGLKVLREGDLRTLTAKAISATTRRLRLVDEKSRKQS.

This sequence belongs to the pyrroline-5-carboxylate reductase family.

Its pathway is mycotoxin biosynthesis. Its function is as follows. Pyrroline-5-carboxylate reductase; part of the gene cluster that mediates the biosynthesis of UCS1025A, a member of the pyrrolizidinone family that acts as a strong telomerase inhibitor and displays potent antibacterial and antitumor properties. These compounds share a hemiaminal-containing pyrrolizidinone core fused with a gamma-lactone, giving a furopyrrolizidine that is connected to a decalin fragment. The polyketide synthase module (PKS) of the PKS-NRPS ucsA is responsible for the synthesis of the polyketide backbone via the condensation of an acetyl-CoA starter unit with 6 malonyl-CoA units. The downstream nonribosomal peptide synthetase (NRPS) module then amidates the carboxyl end of the polyketide with a 2S,3S-methylproline derived from L-isoleucine by the 2-oxoglutarate-dependent dioxygenase ucsF which converts L-isoleucine to (4S,5S)-4-methylpyrroline-5-carboxylate that is further converted to 2S,3S-methylproline by the pyrroline-5-carboxylate reductase ucsG. Reductive release of the completed aminoacyl polyketide from the assembly line can form the 3-pyrrolin-2-one structure via an intramolecular Knoevenagel reaction. Because ucsA lacks a designated enoylreductase (ER) domain, the required activity is provided the enoyl reductase ucsL. This keto acyclic precursor is the substrate of the Diels-Alderase ucsH, that catalyzes the Diels-Alder cycloaddition. Oxidation of the 3S-methyl group to a carboxylate by the cytochrome P450 monooxygenase ucsK allows an oxa-Michael cyclization that might involve the reductase/dehydrogenase ucsI and which furnishes the furopyrrolizidine. The oxidase ucsJ likely plays a critical role in stereoselective reduction of the C5-C6 double bond to afford the required R-configured carboxylate group. Further enolization and oxidation at C5 by an unidentified enzyme affords the last intermediate that can undergo oxa-Michael cyclization to yield UCS1025A. In Acremonium sp, this protein is Pyrroline-5-carboxylate reductase ucsG.